We begin with the raw amino-acid sequence, 172 residues long: Transmembrane protein 91 (172 aa).

2 disordered regions span residues 1 to 31 (MDSP…RHEL) and 55 to 83 (PSVS…DWDG). Residues 1–97 (MDSPSLRELQ…SPFLPHDHLG (97 aa)) are Extracellular-facing. Acidic residues predominate over residues 69–81 (VEDMSSSDSDSDW). A helical membrane pass occupies residues 98–118 (LAVFSMLCCFWPVGIAAFCLA). Topologically, residues 119–139 (QKTNKAWAKGDIQGAGAASRR) are cytoplasmic. The chain crosses the membrane as a helical span at residues 140–160 (AFLLGVLAVGLGVCTYAAALV). Over 161–172 (TLAAYLASRDPP) the chain is Extracellular.

Belongs to the CD225/Dispanin family.

The protein localises to the membrane. The sequence is that of Transmembrane protein 91 (TMEM91) from Homo sapiens (Human).